Consider the following 148-residue polypeptide: Large ribosomal subunit protein uL11 (148 aa).

It belongs to the universal ribosomal protein uL11 family. As to quaternary structure, part of the ribosomal stalk of the 50S ribosomal subunit. Interacts with L10 and the large rRNA to form the base of the stalk. L10 forms an elongated spine to which L12 dimers bind in a sequential fashion forming a multimeric L10(L12)X complex. In terms of processing, one or more lysine residues are methylated.

Its function is as follows. Forms part of the ribosomal stalk which helps the ribosome interact with GTP-bound translation factors. The protein is Large ribosomal subunit protein uL11 of Myxococcus xanthus (strain DK1622).